Reading from the N-terminus, the 420-residue chain is UDP-N-acetylglucosamine 1-carboxyvinyltransferase (420 aa).

Phosphoenolpyruvate is bound at residue 22–23 (KN). Position 93 (Arg93) interacts with UDP-N-acetyl-alpha-D-glucosamine. Catalysis depends on Cys117, which acts as the Proton donor. Cys117 carries the 2-(S-cysteinyl)pyruvic acid O-phosphothioketal modification. UDP-N-acetyl-alpha-D-glucosamine-binding residues include Asp307 and Ile329.

The protein belongs to the EPSP synthase family. MurA subfamily.

Its subcellular location is the cytoplasm. The catalysed reaction is phosphoenolpyruvate + UDP-N-acetyl-alpha-D-glucosamine = UDP-N-acetyl-3-O-(1-carboxyvinyl)-alpha-D-glucosamine + phosphate. It participates in cell wall biogenesis; peptidoglycan biosynthesis. Its function is as follows. Cell wall formation. Adds enolpyruvyl to UDP-N-acetylglucosamine. This is UDP-N-acetylglucosamine 1-carboxyvinyltransferase from Shewanella pealeana (strain ATCC 700345 / ANG-SQ1).